We begin with the raw amino-acid sequence, 377 residues long: MSDTTLELAKRIIACASVTPEDAGCMDILIERLKPLGFSIEFINRNGVTNLWARRGTTAPLFVFAGHTDVVPTGPLDKWTSPPFAPEIRDGVLYGRGTADMKSSVAASVTAVEAFVAANPQHPGSLAFLLTSDEEGDANDGTIAVVEALKARGETLDFCIIGEPTSVDTLGDMVKNGRRGSLSGVLTVKGIQCHIAYPEKGRNPIHEAAPALAELAATEWDQGNEYYQPTTWQISNIHGGTGATNVVPGSVDIKFNFRFSTASTPEGLQQRLSAILEKHKLDYEIKWTLGARPFLTGRGPLADAATTAIREICGIETELSTTGGTSDGRFIAEICRQMLEIGPVNATSHKIDECIAVDALPKLSAIYRRILEQLMTA.

Histidine 67 contacts Zn(2+). Aspartate 69 is an active-site residue. Aspartate 100 provides a ligand contact to Zn(2+). Glutamate 134 functions as the Proton acceptor in the catalytic mechanism. Zn(2+) is bound by residues glutamate 135, glutamate 163, and histidine 349.

Belongs to the peptidase M20A family. DapE subfamily. Homodimer. Zn(2+) is required as a cofactor. It depends on Co(2+) as a cofactor.

The enzyme catalyses N-succinyl-(2S,6S)-2,6-diaminopimelate + H2O = (2S,6S)-2,6-diaminopimelate + succinate. It functions in the pathway amino-acid biosynthesis; L-lysine biosynthesis via DAP pathway; LL-2,6-diaminopimelate from (S)-tetrahydrodipicolinate (succinylase route): step 3/3. In terms of biological role, catalyzes the hydrolysis of N-succinyl-L,L-diaminopimelic acid (SDAP), forming succinate and LL-2,6-diaminopimelate (DAP), an intermediate involved in the bacterial biosynthesis of lysine and meso-diaminopimelic acid, an essential component of bacterial cell walls. This Dechloromonas aromatica (strain RCB) protein is Succinyl-diaminopimelate desuccinylase.